The following is a 208-amino-acid chain: Translation initiation factor 6 (208 aa).

The protein belongs to the eIF-6 family.

Binds to the 50S ribosomal subunit and prevents its association with the 30S ribosomal subunit to form the 70S initiation complex. This is Translation initiation factor 6 (eif6) from Nanoarchaeum equitans (strain Kin4-M).